The chain runs to 155 residues: Endoribonuclease YbeY (155 aa).

The Zn(2+) site is built by His114, His118, and His124.

The protein belongs to the endoribonuclease YbeY family. The cofactor is Zn(2+).

It is found in the cytoplasm. Functionally, single strand-specific metallo-endoribonuclease involved in late-stage 70S ribosome quality control and in maturation of the 3' terminus of the 16S rRNA. The chain is Endoribonuclease YbeY from Escherichia coli O6:K15:H31 (strain 536 / UPEC).